A 431-amino-acid polypeptide reads, in one-letter code: GDP-L-galactose phosphorylase 2 (431 aa).

The active-site Tele-GMP-histidine intermediate is His-235. Acidic residues predominate over residues 398–407 (EEEEEEELEE). A disordered region spans residues 398–417 (EEEEEEELEEQNSMNGGSFT).

This sequence belongs to the GDPGP1 family. As to quaternary structure, interacts with TLP1. In terms of tissue distribution, expressed in leaves, stems, roots, flowers and siliques.

It is found in the cytoplasm. The protein localises to the nucleus. It catalyses the reaction GDP-beta-L-galactose + phosphate = beta-L-galactose 1-phosphate + GDP + H(+). It participates in cofactor biosynthesis; L-ascorbate biosynthesis via GDP-alpha-D-mannose pathway; L-ascorbate from GDP-alpha-D-mannose: step 2/5. In terms of biological role, catalyzes a reaction of the Smirnoff-Wheeler pathway, the major route to ascorbate biosynthesis in plants. Acts as a phosphorylase rather than as a transferase. Uses preferentially GDP-L-galactose and GDP-D-glucose as substrates. Lower activity with GDP-L-fucose, very low activity with GDP-D-mannose, and no activity with UDP-D-glucose, UDP-D-galactose or ADP-D-glucose. Highly specific for inorganic phosphate as the guanylyl acceptor. This is GDP-L-galactose phosphorylase 2 (VTC5) from Arabidopsis thaliana (Mouse-ear cress).